The following is a 200-amino-acid chain: Dual-action ribosomal maturation protein DarP (200 aa).

Disordered regions lie at residues 1 to 25 (MTRK…DRPS) and 177 to 200 (TASG…DDEA). Residues 12–25 (HAAEVDDNGYDRPS) are compositionally biased toward basic and acidic residues. A compositionally biased stretch (acidic residues) spans 184 to 200 (GDDEAADEAGDDHDDEA).

Belongs to the DarP family.

The protein resides in the cytoplasm. Its function is as follows. Member of a network of 50S ribosomal subunit biogenesis factors which assembles along the 30S-50S interface, preventing incorrect 23S rRNA structures from forming. Promotes peptidyl transferase center (PTC) maturation. This Burkholderia ambifaria (strain MC40-6) protein is Dual-action ribosomal maturation protein DarP.